Reading from the N-terminus, the 1322-residue chain is MAATVRFGLLVAMFQAMSRDRTAAKKRARLRALLDRAYGPGGRDDYFSALRLVLPGLDRERGSYGLKEAALASVLVDALGIAKDSPDAVRLTNWRRGGGFRNAGNFALVAAEVLQRRQGMTSGGLTIKEVNDALDRLAATENSVCLESEKLLLILDRSEKASILSSLIKKTNALEMKWLLMIILKDLKLGISEKSVFHEFHPDAEDLFNVTCDLRLVCEKLNDRSQRHKRQDIEVGKAVRPQLSMRVNNASSAWKKLHGKQVVAECKFDGDRIQIHKNGEEIHFFSRSFLDHSEYAPGMSKVIIENILVDRCILDGEMLVWDTVLNRFAEFGSNQEIAKAAKEGLETDRQLCCILEWIASYVLALCVNILSCQDFFFSNKRESYVAFDILYAGDTSVIHQSLTERHEILQKVVRPLKGHLEILVPTGGLNIHRPPDEPCWSILAHSLDDVEKFFKDTVDNRFFPTSPNTDELSNLSISLMIQFRFSDYSICYVLREEGIILKDLESKWEPGDRSGKWLKLKPDYIHAGADLDVIIIGGYYGSGRRGGEVAQFLVGLAVPSDDNSYPKRFLSFCRVGTGLSDEELDALVTKLKPHFRKNEYPKKPPRFYEVTNHSKERPDVWIESPDKQSVRFRKHLIYCITKCRSVIISITSDIRTIKSEVFAAPYSLRFPRIQRLRYDKPWHECLDVQAFVDIVHSSNGTTHRAADDDNDLKNVKNGGSFSMNLNDSVTHCIAAEKKATRQGRIIHYSWILDCCKEKRLLHLQPKFDPCLQPMHKFPEEIDSYADYFYWDIDISDLKQIFSNMDRAVVDSNMVHHYKKKYCADERFCFFQGCCVYFYHAPLVNADYNVISDLALKRVKQDLTMHGGQVCSILAPATHLIIVSVLQAYNFDMLYKSLPPAERRYLHDKRLQVVSNKWLEDSVEKQTRLPETTYSLKPDTLEEIEIERSEETVQPCNDKLEENEKADTSHVKHAPRKRGRPSSSASRTAKPAPRPVRRTRARRGNQHAKIDDVEPEESDHGETGLDDQIPDTDNISKMEVDSFDKDQVSARPVRRTRARRGKQHAKIDYGQSEESDPGETGQDDQRLDADYISKMEEDSSDRDQGAHPTAPRVVRRSRAQRGKWLAKIDRETGPGETGQDDKKLNADSISKMEEHAHDKDQEPPPGAQLITLDEQEPKGIKSSTTETPSSPKHERNQTVLRRDTAETTSSATCEKMEQMVDPLHAMLLDMIPSLGQMKTDVGNRVAEAKAETNPPWVGSSTSSYVAPVPQASASSASSSGVPAPHAGSSTQSTGVPAPDPTAGAPKKKKVSYKDVAGALLKDW.

The ATP site is built by E265, K267, R272, R287, E317, F387, E497, K502, R513, K519, and K521. The active-site N6-AMP-lysine intermediate is the K267. Position 317 (E317) interacts with Mg(2+). E497 contacts Mg(2+). BRCT domains are found at residues 686–768 (LDVQ…PKFD) and 825–935 (ERFC…TYSL). Disordered stretches follow at residues 945–1212 (IERS…SATC) and 1245–1310 (AEAK…KKVS). The segment covering 957-969 (DKLEENEKADTSH) has biased composition (basic and acidic residues). 2 stretches are compositionally biased toward basic residues: residues 970-979 (VKHAPRKRGR) and 994-1005 (PVRRTRARRGNQ). Basic and acidic residues-rich tracts occupy residues 1007 to 1022 (AKIDDVEPEESDHGET) and 1033 to 1047 (NISKMEVDSFDKDQV). The segment covering 1051–1063 (PVRRTRARRGKQH) has biased composition (basic residues). Basic and acidic residues-rich tracts occupy residues 1082 to 1104 (DDQRLDADYISKMEEDSSDRDQG), 1125 to 1161 (AKIDRETGPGETGQDDKKLNADSISKMEEHAHDKDQE), and 1190 to 1204 (PKHERNQTVLRRDTA). The segment covering 1261-1288 (SSYVAPVPQASASSASSSGVPAPHAGSS) has biased composition (low complexity).

The protein belongs to the ATP-dependent DNA ligase family. Requires Mg(2+) as cofactor.

Its subcellular location is the nucleus. The catalysed reaction is ATP + (deoxyribonucleotide)n-3'-hydroxyl + 5'-phospho-(deoxyribonucleotide)m = (deoxyribonucleotide)n+m + AMP + diphosphate.. DNA ligase involved in DNA non-homologous end joining (NHEJ); required for double-strand break (DSB) repair. The sequence is that of Putative DNA ligase 4 (LIG4) from Oryza sativa subsp. japonica (Rice).